Consider the following 212-residue polypeptide: Fe/S biogenesis protein NfuA (212 aa).

Cys-169 and Cys-172 together coordinate [4Fe-4S] cluster.

The protein belongs to the NfuA family. In terms of assembly, homodimer. [4Fe-4S] cluster serves as cofactor.

In terms of biological role, involved in iron-sulfur cluster biogenesis. Binds a 4Fe-4S cluster, can transfer this cluster to apoproteins, and thereby intervenes in the maturation of Fe/S proteins. Could also act as a scaffold/chaperone for damaged Fe/S proteins. This Acinetobacter baumannii (strain AB307-0294) protein is Fe/S biogenesis protein NfuA.